We begin with the raw amino-acid sequence, 290 residues long: Appressoria-specific virulence factor GAS2 (290 aa).

The signal sequence occupies residues methionine 1 to alanine 19. The N-linked (GlcNAc...) asparagine glycan is linked to asparagine 99. Residues leucine 121–lysine 140 form a disordered region.

The protein resides in the cytoplasm. Appressoria-specific virulence factor required for appressorial penetration in host and lesion development. In Pyricularia oryzae (strain 70-15 / ATCC MYA-4617 / FGSC 8958) (Rice blast fungus), this protein is Appressoria-specific virulence factor GAS2.